A 356-amino-acid chain; its full sequence is Phosphoribosyl pyrophosphate synthase-associated protein 1 (356 aa).

Residue Met1 is modified to N-acetylmethionine. Position 2 is an N-acetylproline (Asn2). Phosphoserine occurs at positions 177 and 215.

It belongs to the ribose-phosphate pyrophosphokinase family. In terms of assembly, binds to PRPS1 and PRPS2. In terms of tissue distribution, ubiquitous.

Functionally, seems to play a negative regulatory role in 5-phosphoribose 1-diphosphate synthesis. This Homo sapiens (Human) protein is Phosphoribosyl pyrophosphate synthase-associated protein 1 (PRPSAP1).